Reading from the N-terminus, the 299-residue chain is N-acetylmuramic acid 6-phosphate etherase (299 aa).

The SIS domain occupies 54–217; it reads TIAQYKKGGR…STITMVGVGK (164 aa). The active-site Proton donor is the Glu82. Residue Glu113 is part of the active site.

It belongs to the GCKR-like family. MurNAc-6-P etherase subfamily. As to quaternary structure, homodimer.

The enzyme catalyses N-acetyl-D-muramate 6-phosphate + H2O = N-acetyl-D-glucosamine 6-phosphate + (R)-lactate. The protein operates within amino-sugar metabolism; N-acetylmuramate degradation. Functionally, specifically catalyzes the cleavage of the D-lactyl ether substituent of MurNAc 6-phosphate, producing GlcNAc 6-phosphate and D-lactate. The protein is N-acetylmuramic acid 6-phosphate etherase of Staphylococcus aureus (strain bovine RF122 / ET3-1).